We begin with the raw amino-acid sequence, 141 residues long: MNKSESENDSEYHKEYSESSDPEDTSFISLNKEIQNIRYIISDIKSQTVDVIQNLNNNVKEYNAFIHKFQNEYKTDKISVNSSVCHLESRVHILEHEIKSIKQDNQMLFEKMRDMLTDNSRLFGIIFDILKDLETNPGNKK.

A compositionally biased stretch (basic and acidic residues) spans 1-17 (MNKSESENDSEYHKEYS). A disordered region spans residues 1-24 (MNKSESENDSEYHKEYSESSDPED). Residues 52 to 115 (IQNLNNNVKE…QMLFEKMRDM (64 aa)) adopt a coiled-coil conformation.

This is an uncharacterized protein from Acanthamoeba polyphaga (Amoeba).